Here is a 262-residue protein sequence, read N- to C-terminus: ATP synthase subunit a 1 (262 aa).

A run of 5 helical transmembrane segments spans residues 30 to 50 (TVHI…ILVF), 91 to 111 (IAPL…MDLI), 131 to 151 (IVPT…FALM), 201 to 221 (LFGN…LMPW), and 232 to 252 (AIFH…LTIV).

Belongs to the ATPase A chain family. F-type ATPases have 2 components, CF(1) - the catalytic core - and CF(0) - the membrane proton channel. CF(1) has five subunits: alpha(3), beta(3), gamma(1), delta(1), epsilon(1). CF(0) has three main subunits: a(1), b(2) and c(9-12). The alpha and beta chains form an alternating ring which encloses part of the gamma chain. CF(1) is attached to CF(0) by a central stalk formed by the gamma and epsilon chains, while a peripheral stalk is formed by the delta and b chains.

Its subcellular location is the cell inner membrane. Its function is as follows. Key component of the proton channel; it plays a direct role in the translocation of protons across the membrane. This Photobacterium profundum (strain SS9) protein is ATP synthase subunit a 1.